The chain runs to 36 residues: Photosystem I reaction center subunit VIII (36 aa).

A helical membrane pass occupies residues 8 to 28; sequence SILVPLVGLVFPAIAMASLFL.

The protein belongs to the PsaI family.

It is found in the plastid. Its subcellular location is the chloroplast thylakoid membrane. Its function is as follows. May help in the organization of the PsaL subunit. This Vitis vinifera (Grape) protein is Photosystem I reaction center subunit VIII.